A 189-amino-acid chain; its full sequence is UPF0301 protein RT0098 (189 aa).

The protein belongs to the UPF0301 (AlgH) family.

This Rickettsia typhi (strain ATCC VR-144 / Wilmington) protein is UPF0301 protein RT0098.